The following is an 883-amino-acid chain: Protein argonaute 16 (883 aa).

Residues 254–366 (PVFDFLLTNQ…VPIELCHMVS (113 aa)) form the PAZ domain. A Piwi domain is found at 535–844 (FLLCVLPERK…AAAQMGQFMK (310 aa)).

This sequence belongs to the argonaute family. Ago subfamily.

Probably involved in the RNA silencing pathway. May bind to short RNAs such as microRNAs (miRNAs) or short interfering RNAs (siRNAs), and represses the translation of mRNAs which are complementary to them. This is Protein argonaute 16 (AGO16) from Oryza sativa subsp. japonica (Rice).